A 183-amino-acid polypeptide reads, in one-letter code: Probable chorismate pyruvate-lyase 2 (183 aa).

Residues Arg76, Leu114, and Glu166 each contribute to the substrate site.

Belongs to the UbiC family.

It localises to the cytoplasm. It catalyses the reaction chorismate = 4-hydroxybenzoate + pyruvate. It participates in cofactor biosynthesis; ubiquinone biosynthesis. Its function is as follows. Removes the pyruvyl group from chorismate, with concomitant aromatization of the ring, to provide 4-hydroxybenzoate (4HB) for the ubiquinone pathway. The protein is Probable chorismate pyruvate-lyase 2 of Pseudomonas fluorescens (strain Pf0-1).